Reading from the N-terminus, the 701-residue chain is Serologically defined colon cancer antigen 8 homolog (701 aa).

The segment covering methionine 1–leucine 13 has biased composition (acidic residues). Disordered stretches follow at residues methionine 1–serine 67 and alanine 84–asparagine 114. The segment covering serine 45 to serine 67 has biased composition (polar residues). Coiled coils occupy residues isoleucine 119 to tyrosine 173, histidine 203 to alanine 258, and glutamine 323 to arginine 695. The interval leucine 364–glutamate 387 is disordered.

It is found in the cytoplasm. The protein resides in the cytoskeleton. Its subcellular location is the microtubule organizing center. It localises to the centrosome. The protein localises to the centriole. It is found in the cilium basal body. The protein resides in the cell junction. Plays a role in the establishment of cell polarity and epithelial lumen formation. Also plays an essential role in ciliogenesis and subsequent Hedgehog signaling pathway that requires the presence of intact primary cilia for pathway activation. Mechanistically, interacts with and mediates RABEP2 centrosomal localization which is critical for ciliogenesis. The chain is Serologically defined colon cancer antigen 8 homolog (Sdccag8) from Danio rerio (Zebrafish).